The chain runs to 882 residues: Serine/threonine-protein kinase greatwall (882 aa).

N-acetylmethionine is present on M1. Positions 35–838 (FTIVKPISRG…MKELKRHHLF (804 aa)) constitute a Protein kinase domain. Residues 41 to 49 (ISRGAFGKV) and K62 contribute to the ATP site. Residue D156 is the Proton acceptor of the active site. Residues T207 and T222 each carry the phosphothreonine modification. 3 positions are modified to phosphoserine: S293, S371, and S454. T521 carries the post-translational modification Phosphothreonine. S554, S558, S633, S660, and S671 each carry phosphoserine. Positions 713 to 736 (TPNQVKSGTPYRTPKSVRRGAAPV) are disordered. At T725 the chain carries Phosphothreonine. S728 bears the Phosphoserine mark. A Phosphothreonine; by CDK1 modification is found at T744. Residues 839 to 882 (SDVDWENLQHQTMPFIPQPDDETDTSYFEARNNAQHLTISGFSL) form the AGC-kinase C-terminal domain. Phosphoserine is present on residues S878 and S881.

Belongs to the protein kinase superfamily. AGC Ser/Thr protein kinase family. Post-translationally, phosphorylation at Thr-744 by CDK1 during M phase activates its kinase activity. Maximum phosphorylation occurs in prometaphase.

It localises to the cytoplasm. Its subcellular location is the cytoskeleton. The protein localises to the microtubule organizing center. It is found in the centrosome. The protein resides in the nucleus. It carries out the reaction L-seryl-[protein] + ATP = O-phospho-L-seryl-[protein] + ADP + H(+). The enzyme catalyses L-threonyl-[protein] + ATP = O-phospho-L-threonyl-[protein] + ADP + H(+). In terms of biological role, serine/threonine kinase that plays a key role in M phase by acting as a regulator of mitosis entry and maintenance. Acts by promoting the inactivation of protein phosphatase 2A (PP2A) during M phase: does not directly inhibit PP2A but acts by mediating phosphorylation and subsequent activation of ARPP19 and ENSA at 'Ser-62' and 'Ser-67', respectively. ARPP19 and ENSA are phosphatase inhibitors that specifically inhibit the PPP2R2D (PR55-delta) subunit of PP2A. Inactivation of PP2A during M phase is essential to keep cyclin-B1-CDK1 activity high. Following DNA damage, it is also involved in checkpoint recovery by being inhibited. The protein is Serine/threonine-protein kinase greatwall (MASTL) of Ailuropoda melanoleuca (Giant panda).